Reading from the N-terminus, the 457-residue chain is Probable xyloglucan 6-xylosyltransferase 5 (457 aa).

A disordered region spans residues 1-40 (MGQDGSPAHKRPSGSGGGLPTTTLTNGGGRGGRGGLLPRG). Residues 1 to 51 (MGQDGSPAHKRPSGSGGGLPTTTLTNGGGRGGRGGLLPRGRQMQKTFNNIK) lie on the Cytoplasmic side of the membrane. A compositionally biased stretch (gly residues) spans 26–37 (NGGGRGGRGGLL). The chain crosses the membrane as a helical; Signal-anchor for type II membrane protein span at residues 52–72 (ITILCGFVTILVLRGTIGVGN). Topologically, residues 73–457 (LGSSSADAVN…RTPVETKPQN (385 aa)) are lumenal. A disordered region spans residues 97–116 (RSDSDPTDLDEPQEGDMNPN). Residues 101-110 (DPTDLDEPQE) show a composition bias toward acidic residues. N-linked (GlcNAc...) asparagine glycans are attached at residues asparagine 116 and asparagine 432.

It belongs to the glycosyltransferase 34 family. Interacts with XXT2 and CSLC4. Interacts with FUT1 and XLT2. In terms of tissue distribution, highly expressed in roots, stems and cauline leaves, and at lower levels in rosette leaves, flowers and siliques.

It localises to the golgi apparatus membrane. The enzyme catalyses Transfers an alpha-D-xylosyl residue from UDP-D-xylose to a glucose residue in xyloglucan, forming an alpha-(1-&gt;6)-D-xylosyl-D-glucose linkage.. In terms of biological role, probable xyloglucan xylosyltransferase involved in the biosynthesis of xyloglucan in roots. May act in association with XXT1 and XXT2. Associates with other xyloglucan-synthesizing enzymes to form multiprotein complexes for xyloglucan synthesis in the Golgi. In Arabidopsis thaliana (Mouse-ear cress), this protein is Probable xyloglucan 6-xylosyltransferase 5.